The sequence spans 209 residues: Small ribosomal subunit protein uS4 (209 aa).

An S4 RNA-binding domain is found at 99 to 162 (RRLDNVVYRL…RESNKFQEMK (64 aa)).

It belongs to the universal ribosomal protein uS4 family. Part of the 30S ribosomal subunit. Contacts protein S5. The interaction surface between S4 and S5 is involved in control of translational fidelity.

Its function is as follows. One of the primary rRNA binding proteins, it binds directly to 16S rRNA where it nucleates assembly of the body of the 30S subunit. Functionally, with S5 and S12 plays an important role in translational accuracy. This Syntrophomonas wolfei subsp. wolfei (strain DSM 2245B / Goettingen) protein is Small ribosomal subunit protein uS4.